Here is a 98-residue protein sequence, read N- to C-terminus: UPF0251 protein Sputcn32_0687 (98 aa).

The protein belongs to the UPF0251 family.

This chain is UPF0251 protein Sputcn32_0687, found in Shewanella putrefaciens (strain CN-32 / ATCC BAA-453).